Here is a 149-residue protein sequence, read N- to C-terminus: D-aminoacyl-tRNA deacylase (149 aa).

The Gly-cisPro motif, important for rejection of L-amino acids motif lies at 137–138 (GP).

It belongs to the DTD family. Homodimer.

The protein localises to the cytoplasm. The enzyme catalyses glycyl-tRNA(Ala) + H2O = tRNA(Ala) + glycine + H(+). The catalysed reaction is a D-aminoacyl-tRNA + H2O = a tRNA + a D-alpha-amino acid + H(+). Functionally, an aminoacyl-tRNA editing enzyme that deacylates mischarged D-aminoacyl-tRNAs. Also deacylates mischarged glycyl-tRNA(Ala), protecting cells against glycine mischarging by AlaRS. Acts via tRNA-based rather than protein-based catalysis; rejects L-amino acids rather than detecting D-amino acids in the active site. By recycling D-aminoacyl-tRNA to D-amino acids and free tRNA molecules, this enzyme counteracts the toxicity associated with the formation of D-aminoacyl-tRNA entities in vivo and helps enforce protein L-homochirality. The sequence is that of D-aminoacyl-tRNA deacylase from Janthinobacterium sp. (strain Marseille) (Minibacterium massiliensis).